The primary structure comprises 417 residues: Tryptophan synthase beta chain (417 aa).

An N6-(pyridoxal phosphate)lysine modification is found at K111.

Belongs to the TrpB family. As to quaternary structure, tetramer of two alpha and two beta chains. It depends on pyridoxal 5'-phosphate as a cofactor.

The enzyme catalyses (1S,2R)-1-C-(indol-3-yl)glycerol 3-phosphate + L-serine = D-glyceraldehyde 3-phosphate + L-tryptophan + H2O. The protein operates within amino-acid biosynthesis; L-tryptophan biosynthesis; L-tryptophan from chorismate: step 5/5. The beta subunit is responsible for the synthesis of L-tryptophan from indole and L-serine. The protein is Tryptophan synthase beta chain of Fervidobacterium nodosum (strain ATCC 35602 / DSM 5306 / Rt17-B1).